The chain runs to 87 residues: Small ribosomal subunit protein uS17 (87 aa).

Belongs to the universal ribosomal protein uS17 family. As to quaternary structure, part of the 30S ribosomal subunit.

In terms of biological role, one of the primary rRNA binding proteins, it binds specifically to the 5'-end of 16S ribosomal RNA. This Thioalkalivibrio sulfidiphilus (strain HL-EbGR7) protein is Small ribosomal subunit protein uS17.